The sequence spans 351 residues: Dihydroorotate dehydrogenase (quinone) (351 aa).

FMN-binding positions include 61–65 (AGLDK) and T85. Position 65 (K65) interacts with substrate. 110–114 (NRMGF) provides a ligand contact to substrate. N139 and N172 together coordinate FMN. Substrate is bound at residue N172. The active-site Nucleophile is S175. Position 177 (N177) interacts with substrate. Residues K217 and T245 each coordinate FMN. Position 246–247 (246–247 (NT)) interacts with substrate. Residues G268, G297, and 318–319 (YS) each bind FMN.

The protein belongs to the dihydroorotate dehydrogenase family. Type 2 subfamily. As to quaternary structure, monomer. FMN serves as cofactor.

The protein localises to the cell membrane. The catalysed reaction is (S)-dihydroorotate + a quinone = orotate + a quinol. The protein operates within pyrimidine metabolism; UMP biosynthesis via de novo pathway; orotate from (S)-dihydroorotate (quinone route): step 1/1. Functionally, catalyzes the conversion of dihydroorotate to orotate with quinone as electron acceptor. This chain is Dihydroorotate dehydrogenase (quinone), found in Stenotrophomonas maltophilia (strain R551-3).